The chain runs to 273 residues: 4-hydroxy-tetrahydrodipicolinate reductase (273 aa).

NAD(+) is bound by residues 8 to 13 (GALGRM), Asp-35, 103 to 105 (GTT), and 129 to 132 (SQNY). His-161 functions as the Proton donor/acceptor in the catalytic mechanism. Residue His-162 participates in (S)-2,3,4,5-tetrahydrodipicolinate binding. The active-site Proton donor is the Lys-165. 171–172 (GT) is a binding site for (S)-2,3,4,5-tetrahydrodipicolinate.

It belongs to the DapB family.

Its subcellular location is the cytoplasm. The catalysed reaction is (S)-2,3,4,5-tetrahydrodipicolinate + NAD(+) + H2O = (2S,4S)-4-hydroxy-2,3,4,5-tetrahydrodipicolinate + NADH + H(+). The enzyme catalyses (S)-2,3,4,5-tetrahydrodipicolinate + NADP(+) + H2O = (2S,4S)-4-hydroxy-2,3,4,5-tetrahydrodipicolinate + NADPH + H(+). Its pathway is amino-acid biosynthesis; L-lysine biosynthesis via DAP pathway; (S)-tetrahydrodipicolinate from L-aspartate: step 4/4. Functionally, catalyzes the conversion of 4-hydroxy-tetrahydrodipicolinate (HTPA) to tetrahydrodipicolinate. The protein is 4-hydroxy-tetrahydrodipicolinate reductase of Methanococcus aeolicus (strain ATCC BAA-1280 / DSM 17508 / OCM 812 / Nankai-3).